Consider the following 209-residue polypeptide: Ribosomal RNA small subunit methyltransferase G (209 aa).

S-adenosyl-L-methionine is bound by residues Gly-71, Phe-76, Ala-122–Glu-123, and Arg-135.

The protein belongs to the methyltransferase superfamily. RNA methyltransferase RsmG family.

The protein resides in the cytoplasm. In terms of biological role, specifically methylates the N7 position of a guanine in 16S rRNA. This is Ribosomal RNA small subunit methyltransferase G from Flavobacterium johnsoniae (strain ATCC 17061 / DSM 2064 / JCM 8514 / BCRC 14874 / CCUG 350202 / NBRC 14942 / NCIMB 11054 / UW101) (Cytophaga johnsonae).